A 404-amino-acid polypeptide reads, in one-letter code: Cysteine desulfurase IscS (404 aa).

Pyridoxal 5'-phosphate-binding positions include 75–76 (AT), Asn155, Gln183, and 203–205 (SAH). At Lys206 the chain carries N6-(pyridoxal phosphate)lysine. Thr243 provides a ligand contact to pyridoxal 5'-phosphate. Cys328 (cysteine persulfide intermediate) is an active-site residue. Cys328 provides a ligand contact to [2Fe-2S] cluster.

This sequence belongs to the class-V pyridoxal-phosphate-dependent aminotransferase family. NifS/IscS subfamily. As to quaternary structure, homodimer. Forms a heterotetramer with IscU, interacts with other sulfur acceptors. It depends on pyridoxal 5'-phosphate as a cofactor.

The protein resides in the cytoplasm. The enzyme catalyses (sulfur carrier)-H + L-cysteine = (sulfur carrier)-SH + L-alanine. It functions in the pathway cofactor biosynthesis; iron-sulfur cluster biosynthesis. Functionally, master enzyme that delivers sulfur to a number of partners involved in Fe-S cluster assembly, tRNA modification or cofactor biosynthesis. Catalyzes the removal of elemental sulfur atoms from cysteine to produce alanine. Functions as a sulfur delivery protein for Fe-S cluster synthesis onto IscU, an Fe-S scaffold assembly protein, as well as other S acceptor proteins. The chain is Cysteine desulfurase IscS from Shewanella sediminis (strain HAW-EB3).